The following is a 65-amino-acid chain: Large ribosomal subunit protein uL29 (65 aa).

The protein belongs to the universal ribosomal protein uL29 family.

The protein is Large ribosomal subunit protein uL29 of Thioalkalivibrio sulfidiphilus (strain HL-EbGR7).